The primary structure comprises 470 residues: Aminodeoxychorismate synthase component 1 (470 aa).

The protein belongs to the anthranilate synthase component I family. Monomer. Heterodimer consisting of two non-identical subunits: a glutamine amidotransferase subunit (PabA) and a aminodeoxychorismate synthase subunit (PabB). The cofactor is Mg(2+).

The enzyme catalyses chorismate + L-glutamine = 4-amino-4-deoxychorismate + L-glutamate. It functions in the pathway cofactor biosynthesis; tetrahydrofolate biosynthesis; 4-aminobenzoate from chorismate: step 1/2. Part of a heterodimeric complex that catalyzes the two-step biosynthesis of 4-amino-4-deoxychorismate (ADC), a precursor of p-aminobenzoate (PABA) and tetrahydrofolate. In the first step, a glutamine amidotransferase (PabA) generates ammonia as a substrate that, along with chorismate, is used in the second step, catalyzed by aminodeoxychorismate synthase (PabB) to produce ADC. The sequence is that of Aminodeoxychorismate synthase component 1 (pabB) from Lactococcus lactis subsp. lactis (Streptococcus lactis).